A 162-amino-acid polypeptide reads, in one-letter code: Succinate dehydrogenase assembly factor 2, mitochondrial (162 aa).

Residues 1–35 (MHNMFPALTKTLSLQGYKIINSQTGSAAWSCGRRW) constitute a mitochondrion transit peptide.

This sequence belongs to the SDHAF2 family. Interacts with the flavoprotein subunit within the SDH catalytic dimer.

The protein localises to the mitochondrion matrix. Its function is as follows. Plays an essential role in the assembly of succinate dehydrogenase (SDH), an enzyme complex (also referred to as respiratory complex II) that is a component of both the tricarboxylic acid (TCA) cycle and the mitochondrial electron transport chain, and which couples the oxidation of succinate to fumarate with the reduction of ubiquinone (coenzyme Q) to ubiquinol. Required for flavinylation (covalent attachment of FAD) of the flavoprotein subunit of the SDH catalytic dimer. This is Succinate dehydrogenase assembly factor 2, mitochondrial from Saccharomyces cerevisiae (strain RM11-1a) (Baker's yeast).